A 372-amino-acid chain; its full sequence is D-alanine--D-alanine ligase (372 aa).

The ATP-grasp domain occupies 145-349 (KTVLRAGGIP…CPNLLDQLIE (205 aa)). 176 to 231 (DRWGTSELFVKAVSLGSSVATLPVKTETEFTKAVKEVFRYDDRLMVEPRIRGREIE) contributes to the ATP binding site. Mg(2+) contacts are provided by Asp303, Glu316, and Asn318.

This sequence belongs to the D-alanine--D-alanine ligase family. Requires Mg(2+) as cofactor. Mn(2+) is required as a cofactor.

The protein resides in the cytoplasm. It catalyses the reaction 2 D-alanine + ATP = D-alanyl-D-alanine + ADP + phosphate + H(+). Its pathway is cell wall biogenesis; peptidoglycan biosynthesis. Its function is as follows. Cell wall formation. This chain is D-alanine--D-alanine ligase, found in Coxiella burnetii (strain Dugway 5J108-111).